The primary structure comprises 210 residues: Chloramphenicol acetyltransferase (210 aa).

Histidine 79 is a catalytic residue.

Belongs to the transferase hexapeptide repeat family.

The enzyme catalyses chloramphenicol + acetyl-CoA = chloramphenicol 3-acetate + CoA. This enzyme is an effector of chloramphenicol resistance in bacteria. In Klebsiella aerogenes (Enterobacter aerogenes), this protein is Chloramphenicol acetyltransferase (catB4).